Consider the following 1100-residue polypeptide: Exportin-T (1100 aa).

The protein belongs to the exportin family. As to quaternary structure, interacts with CEX1, GSP1, GSP2, NSP1, NUP2 and UTP8.

The protein resides in the nucleus. It is found in the cytoplasm. In terms of biological role, tRNA nucleus export receptor which facilitates tRNA translocation across the nuclear pore complex. Preferentially interacts with tRNAs with mature 5'- and 3'-termini and does not distinguish between intron-containing and spliced tRNAs. In the nucleus binds to tRNA and to the Ran-GTPases GSP1 or GSP2 in their active GTP-bound form. Docking of this trimeric complex to the nuclear pore complex (NPC) is mediated through binding to nucleoporins. Upon transit of a nuclear export complex into the cytoplasm, disassembling of the complex and hydrolysis of Ran-GTP to Ran-GDP cause release of the tRNA from the export receptor. The directionality of nuclear export is thought to be conferred by an asymmetric distribution of the GTP- and GDP-bound forms of Ran between the cytoplasm and nucleus. This is Exportin-T (LOS1) from Saccharomyces cerevisiae (strain ATCC 204508 / S288c) (Baker's yeast).